Here is a 229-residue protein sequence, read N- to C-terminus: Synaptogyrin-3 (229 aa).

An N-acetylmethionine modification is found at methionine 1. The region spanning 20-172 is the MARVEL domain; sequence FARRPQTLLR…LTVKALQRFR (153 aa). A run of 4 helical transmembrane segments spans residues 30–50, 70–90, 105–125, and 148–168; these read VVSW…GYVN, FGVV…LLDV, VLLD…GFCF, and AAIA…VKAL. Residues 209–223 are compositionally biased toward polar residues; the sequence is QSPPFTETLDTSSKG. A disordered region spans residues 209-229; the sequence is QSPPFTETLDTSSKGYQVPAY.

This sequence belongs to the synaptogyrin family. In terms of assembly, interacts (via N-terminus) with SLC6A3 (via N-terminus). May interact with VMAT2. In terms of tissue distribution, specifically expressed in brain. Found in the brain across the dorsal and ventral corpus striatum as well as in the cortex.

It is found in the cytoplasmic vesicle. The protein localises to the secretory vesicle. It localises to the synaptic vesicle membrane. Its subcellular location is the synapse. In terms of biological role, may play a role in regulated exocytosis. May indirectly regulate the activity of the plasma membrane dopamine transporter SLC6A3 and thereby regulate dopamine transport back from the synaptic cleft into the presynaptic terminal. The protein is Synaptogyrin-3 of Mus musculus (Mouse).